We begin with the raw amino-acid sequence, 194 residues long: Large ribosomal subunit protein uL5 (194 aa).

This sequence belongs to the universal ribosomal protein uL5 family. Part of the 50S ribosomal subunit; part of the 5S rRNA/L5/L18/L25 subcomplex. Contacts the 5S rRNA and the P site tRNA. Forms a bridge to the 30S subunit in the 70S ribosome.

Its function is as follows. This is one of the proteins that bind and probably mediate the attachment of the 5S RNA into the large ribosomal subunit, where it forms part of the central protuberance. In the 70S ribosome it contacts protein S13 of the 30S subunit (bridge B1b), connecting the 2 subunits; this bridge is implicated in subunit movement. Contacts the P site tRNA; the 5S rRNA and some of its associated proteins might help stabilize positioning of ribosome-bound tRNAs. The chain is Large ribosomal subunit protein uL5 from Frankia alni (strain DSM 45986 / CECT 9034 / ACN14a).